Here is a 104-residue protein sequence, read N- to C-terminus: L-rhamnose mutarotase (104 aa).

Tyr18 contacts substrate. His22 (proton donor) is an active-site residue. Substrate-binding positions include Tyr41 and 76 to 77 (WW).

This sequence belongs to the rhamnose mutarotase family. In terms of assembly, homodimer.

Its subcellular location is the cytoplasm. It carries out the reaction alpha-L-rhamnose = beta-L-rhamnose. The protein operates within carbohydrate metabolism; L-rhamnose metabolism. Functionally, involved in the anomeric conversion of L-rhamnose. This is L-rhamnose mutarotase from Escherichia coli O127:H6 (strain E2348/69 / EPEC).